A 485-amino-acid chain; its full sequence is CCA-adding enzyme (485 aa).

ATP contacts are provided by Ser-53 and Arg-56. 2 residues coordinate CTP: Ser-53 and Arg-56. The Mg(2+) site is built by Asp-65, Asp-67, and Asp-124. 3 residues coordinate ATP: His-146, Lys-164, and Tyr-173. CTP is bound by residues His-146, Lys-164, and Tyr-173.

Belongs to the tRNA nucleotidyltransferase/poly(A) polymerase family. Archaeal CCA-adding enzyme subfamily. As to quaternary structure, homodimer. Requires Mg(2+) as cofactor.

The catalysed reaction is a tRNA precursor + 2 CTP + ATP = a tRNA with a 3' CCA end + 3 diphosphate. It catalyses the reaction a tRNA with a 3' CCA end + 2 CTP + ATP = a tRNA with a 3' CCACCA end + 3 diphosphate. Functionally, catalyzes the addition and repair of the essential 3'-terminal CCA sequence in tRNAs without using a nucleic acid template. Adds these three nucleotides in the order of C, C, and A to the tRNA nucleotide-73, using CTP and ATP as substrates and producing inorganic pyrophosphate. tRNA 3'-terminal CCA addition is required both for tRNA processing and repair. Also involved in tRNA surveillance by mediating tandem CCA addition to generate a CCACCA at the 3' terminus of unstable tRNAs. While stable tRNAs receive only 3'-terminal CCA, unstable tRNAs are marked with CCACCA and rapidly degraded. This Methanopyrus kandleri (strain AV19 / DSM 6324 / JCM 9639 / NBRC 100938) protein is CCA-adding enzyme.